Here is a 397-residue protein sequence, read N- to C-terminus: Exodeoxyribonuclease 7 large subunit (397 aa).

Belongs to the XseA family. As to quaternary structure, heterooligomer composed of large and small subunits.

It is found in the cytoplasm. It catalyses the reaction Exonucleolytic cleavage in either 5'- to 3'- or 3'- to 5'-direction to yield nucleoside 5'-phosphates.. Its function is as follows. Bidirectionally degrades single-stranded DNA into large acid-insoluble oligonucleotides, which are then degraded further into small acid-soluble oligonucleotides. This Anaplasma marginale (strain St. Maries) protein is Exodeoxyribonuclease 7 large subunit.